We begin with the raw amino-acid sequence, 432 residues long: Interleukin-11 receptor subunit alpha-1 (432 aa).

A signal peptide spans 1-23 (MSSSCSGLTRVLVAVATALVSSS). Residues 24-372 (SPCPQAWGPP…DPLEQVAVLA (349 aa)) are Extracellular-facing. Residues 27 to 110 (PQAWGPPGVQ…SGGMVTLKLG (84 aa)) form the Ig-like C2-type domain. 3 cysteine pairs are disulfide-bonded: Cys48-Cys94, Cys120-Cys130, and Cys170-Cys180. 2 consecutive Fibronectin type-III domains span residues 112-219 (PPAR…LRPD) and 220-317 (PPQG…TPST). The N-linked (GlcNAc...) asparagine glycan is linked to Asn127. Residues 151-170 (KTLPGAESQRESPSTGPWPC) form a disordered region. Asn194 carries N-linked (GlcNAc...) asparagine glycosylation. The short motif at 304-308 (WSAWS) is the WSXWS motif element. Disordered regions lie at residues 309-332 (PEAW…QGHG) and 342-361 (EDSP…PLDH). A helical transmembrane segment spans residues 373-393 (SLGIFSCLGLAVGALALGLWL). Topologically, residues 394-432 (RLRRSGKDGPQKPGLLAPMIPVEKLPGIPNLQRTPENFS) are cytoplasmic.

Belongs to the type I cytokine receptor family. Type 3 subfamily. On IL11 binding, forms a multimer complex with IL6ST/gp130. Post-translationally, a short soluble form is also released from the membrane by proteolysis. The sIL11RA is formed either by limited proteolysis of membrane-bound receptors, a process referred to as ectodomain shedding, or directly secreted from the cells after alternative mRNA splicing. mIL11RA is cleaved by the proteases ADAM10, ELANE and PRTN3. In terms of tissue distribution, widely expressed in all adult tissues and in embryos. Highest levels in kidney, skeletal muscle and embryo.

It is found in the membrane. It localises to the secreted. Receptor for interleukin-11. The receptor systems for IL6, LIF, OSM, CNTF, IL11 and CT1 can utilize IL6ST for initiating signal transmission. The IL11/IL11RA/IL6ST complex may be involved in the control of proliferation and/or differentiation of skeletogenic progenitor or other mesenchymal cells. Essential for the normal development of craniofacial bones and teeth. Functionally, soluble form of IL11 receptor (sIL11RA) that acts as an agonist of IL11 activity. The IL11:sIL11RA complex binds to IL6ST/gp130 on cell surfaces and induces signaling also on cells that do not express membrane-bound IL11RA in a process called IL11 trans-signaling. This is Interleukin-11 receptor subunit alpha-1 from Mus musculus (Mouse).